A 144-amino-acid chain; its full sequence is Cytochrome c-type biogenesis protein CcmE (144 aa).

The Cytoplasmic segment spans residues 1–7; the sequence is MTRKQKR. The helical; Signal-anchor for type II membrane protein transmembrane segment at 8–28 threads the bilayer; that stretch reads LAVIGSGMGFLALAAALTFYA. The Periplasmic segment spans residues 29–144; that stretch reads LGQQTSYFYM…LKKDGLWQEQ (116 aa). Positions 122 and 126 each coordinate heme.

Belongs to the CcmE/CycJ family.

The protein localises to the cell inner membrane. Heme chaperone required for the biogenesis of c-type cytochromes. Transiently binds heme delivered by CcmC and transfers the heme to apo-cytochromes in a process facilitated by CcmF and CcmH. The chain is Cytochrome c-type biogenesis protein CcmE from Chelativorans sp. (strain BNC1).